The primary structure comprises 128 residues: uncharacterized protein (128 aa).

The segment covering 1 to 11 (MDNKKKEENPS) has biased composition (basic and acidic residues). The segment at 1–40 (MDNKKKEENPSKSDTSISLPPSSTGEALQNYTESEWNASD) is disordered. Residues 12 to 37 (KSDTSISLPPSSTGEALQNYTESEWN) are compositionally biased toward polar residues.

This is an uncharacterized protein from Caenorhabditis elegans.